Here is a 719-residue protein sequence, read N- to C-terminus: Pesticidal crystal protein Cry1Id (719 aa).

The protein belongs to the delta endotoxin family.

Functionally, promotes colloidosmotic lysis by binding to the midgut epithelial cells of many lepidopteran larvae. Active on Plutella xylostella and on Bombyx mori. The chain is Pesticidal crystal protein Cry1Id (cry1Id) from Bacillus thuringiensis.